Reading from the N-terminus, the 263-residue chain is Phosphatidylglycerol--prolipoprotein diacylglyceryl transferase (263 aa).

4 helical membrane-spanning segments follow: residues 15–35 (ISIH…VYLA), 52–72 (FILL…VIFQ), 83–103 (IFAI…GAAV), and 112–132 (AIAV…AQSI). Arg134 provides a ligand contact to a 1,2-diacyl-sn-glycero-3-phospho-(1'-sn-glycerol). Transmembrane regions (helical) follow at residues 170–190 (VPTF…ILGL), 200–220 (GDVT…IEGM), and 227–247 (FVGL…GAVL).

Belongs to the Lgt family.

It localises to the cell membrane. The enzyme catalyses L-cysteinyl-[prolipoprotein] + a 1,2-diacyl-sn-glycero-3-phospho-(1'-sn-glycerol) = an S-1,2-diacyl-sn-glyceryl-L-cysteinyl-[prolipoprotein] + sn-glycerol 1-phosphate + H(+). It functions in the pathway protein modification; lipoprotein biosynthesis (diacylglyceryl transfer). In terms of biological role, catalyzes the transfer of the diacylglyceryl group from phosphatidylglycerol to the sulfhydryl group of the N-terminal cysteine of a prolipoprotein, the first step in the formation of mature lipoproteins. This is Phosphatidylglycerol--prolipoprotein diacylglyceryl transferase from Streptococcus thermophilus (strain ATCC BAA-491 / LMD-9).